The primary structure comprises 252 residues: Probable transcriptional regulatory protein CE1776 (252 aa).

The interval 1-22 (MAGHSKWATTKHKKAANDAKRG) is disordered.

Belongs to the TACO1 family.

It is found in the cytoplasm. In Corynebacterium efficiens (strain DSM 44549 / YS-314 / AJ 12310 / JCM 11189 / NBRC 100395), this protein is Probable transcriptional regulatory protein CE1776.